The following is a 293-amino-acid chain: Fructose-bisphosphate aldolase class 1 (293 aa).

The active-site Proton acceptor is the glutamate 176. The Schiff-base intermediate with dihydroxyacetone-P role is filled by lysine 211.

This sequence belongs to the class I fructose-bisphosphate aldolase family.

It carries out the reaction beta-D-fructose 1,6-bisphosphate = D-glyceraldehyde 3-phosphate + dihydroxyacetone phosphate. The protein operates within carbohydrate degradation; glycolysis; D-glyceraldehyde 3-phosphate and glycerone phosphate from D-glucose: step 4/4. The chain is Fructose-bisphosphate aldolase class 1 from Porphyromonas gingivalis (strain ATCC 33277 / DSM 20709 / CIP 103683 / JCM 12257 / NCTC 11834 / 2561).